A 568-amino-acid polypeptide reads, in one-letter code: Peptidoglycan D,D-transpeptidase FtsI (568 aa).

Residues Phe19–Phe39 traverse the membrane as a helical segment. The active-site Acyl-ester intermediate is Ser302.

The protein belongs to the transpeptidase family. FtsI subfamily.

It is found in the cell inner membrane. It carries out the reaction Preferential cleavage: (Ac)2-L-Lys-D-Ala-|-D-Ala. Also transpeptidation of peptidyl-alanyl moieties that are N-acyl substituents of D-alanine.. The protein operates within cell wall biogenesis; peptidoglycan biosynthesis. Functionally, catalyzes cross-linking of the peptidoglycan cell wall at the division septum. The sequence is that of Peptidoglycan D,D-transpeptidase FtsI from Buchnera aphidicola subsp. Schizaphis graminum (strain Sg).